Here is a 468-residue protein sequence, read N- to C-terminus: Uronate isomerase (468 aa).

This sequence belongs to the metallo-dependent hydrolases superfamily. Uronate isomerase family.

It catalyses the reaction D-glucuronate = D-fructuronate. It carries out the reaction aldehydo-D-galacturonate = keto-D-tagaturonate. It participates in carbohydrate metabolism; pentose and glucuronate interconversion. This Marinomonas sp. (strain MWYL1) protein is Uronate isomerase.